Reading from the N-terminus, the 189-residue chain is Orotate phosphoribosyltransferase (189 aa).

Residues R99, K100, K103, H105, and E126–S134 contribute to the 5-phospho-alpha-D-ribose 1-diphosphate site. Residues T130 and R158 each coordinate orotate.

This sequence belongs to the purine/pyrimidine phosphoribosyltransferase family. PyrE subfamily. Homodimer. Mg(2+) serves as cofactor.

The catalysed reaction is orotidine 5'-phosphate + diphosphate = orotate + 5-phospho-alpha-D-ribose 1-diphosphate. Its pathway is pyrimidine metabolism; UMP biosynthesis via de novo pathway; UMP from orotate: step 1/2. In terms of biological role, catalyzes the transfer of a ribosyl phosphate group from 5-phosphoribose 1-diphosphate to orotate, leading to the formation of orotidine monophosphate (OMP). This chain is Orotate phosphoribosyltransferase, found in Thermosynechococcus vestitus (strain NIES-2133 / IAM M-273 / BP-1).